Here is a 110-residue protein sequence, read N- to C-terminus: Protein NATD1 (110 aa).

Residues 19–109 enclose the N-acetyltransferase domain; that stretch reads EHDRQRRQFS…PLPQYLERLQ (91 aa).

Belongs to the NATD1 family. As to expression, expressed in the heart, testis, kidney and lung.

The polypeptide is Protein NATD1 (Natd1) (Mus musculus (Mouse)).